Here is a 28-residue protein sequence, read N- to C-terminus: Mast cell degranulating peptide (28 aa).

Intrachain disulfides connect C2/C18 and C4/C22.

In terms of tissue distribution, expressed by the venom gland.

It localises to the secreted. Functionally, mast cell degranulating peptide. The chain is Mast cell degranulating peptide from Bombus pensylvanicus (American bumblebee).